We begin with the raw amino-acid sequence, 504 residues long: Probable cytosol aminopeptidase (504 aa).

Mn(2+) contacts are provided by K263 and D268. The active site involves K275. D286, D345, and E347 together coordinate Mn(2+). R349 is a catalytic residue.

Belongs to the peptidase M17 family. Requires Mn(2+) as cofactor.

It localises to the cytoplasm. It carries out the reaction Release of an N-terminal amino acid, Xaa-|-Yaa-, in which Xaa is preferably Leu, but may be other amino acids including Pro although not Arg or Lys, and Yaa may be Pro. Amino acid amides and methyl esters are also readily hydrolyzed, but rates on arylamides are exceedingly low.. It catalyses the reaction Release of an N-terminal amino acid, preferentially leucine, but not glutamic or aspartic acids.. Functionally, presumably involved in the processing and regular turnover of intracellular proteins. Catalyzes the removal of unsubstituted N-terminal amino acids from various peptides. The polypeptide is Probable cytosol aminopeptidase (Sulfurihydrogenibium sp. (strain YO3AOP1)).